A 345-amino-acid polypeptide reads, in one-letter code: Phosphoribosylformylglycinamidine cyclo-ligase (345 aa).

Belongs to the AIR synthase family.

It localises to the cytoplasm. It catalyses the reaction 2-formamido-N(1)-(5-O-phospho-beta-D-ribosyl)acetamidine + ATP = 5-amino-1-(5-phospho-beta-D-ribosyl)imidazole + ADP + phosphate + H(+). The protein operates within purine metabolism; IMP biosynthesis via de novo pathway; 5-amino-1-(5-phospho-D-ribosyl)imidazole from N(2)-formyl-N(1)-(5-phospho-D-ribosyl)glycinamide: step 2/2. This chain is Phosphoribosylformylglycinamidine cyclo-ligase, found in Pasteurella multocida (strain Pm70).